A 328-amino-acid polypeptide reads, in one-letter code: Glycerophosphodiester phosphodiesterase GDPD4 (328 aa).

The helical transmembrane segment at 35–55 threads the bilayer; it reads TILFAVIFLAIFPPLYFHFKL. The GP-PDE domain maps to 73-312; that stretch reads PLVCAHGGDS…SDPSMFQGLM (240 aa).

Belongs to the glycerophosphoryl diester phosphodiesterase family. Expressed in rosette and cauline leaves.

It localises to the membrane. The catalysed reaction is a sn-glycero-3-phosphodiester + H2O = an alcohol + sn-glycerol 3-phosphate + H(+). The protein is Glycerophosphodiester phosphodiesterase GDPD4 of Arabidopsis thaliana (Mouse-ear cress).